Consider the following 380-residue polypeptide: Probable pectin lyase A (380 aa).

The first 20 residues, M1–A20, serve as a signal peptide directing secretion. 2 disulfide bridges follow: C83/C102 and C92/C226. N-linked (GlcNAc...) asparagine glycosylation is present at N129. The active site involves R256. Cysteines 323 and 331 form a disulfide.

This sequence belongs to the polysaccharide lyase 1 family.

The protein localises to the secreted. It catalyses the reaction Eliminative cleavage of (1-&gt;4)-alpha-D-galacturonan methyl ester to give oligosaccharides with 4-deoxy-6-O-methyl-alpha-D-galact-4-enuronosyl groups at their non-reducing ends.. In terms of biological role, pectinolytic enzymes consist of four classes of enzymes: pectin lyase, polygalacturonase, pectin methylesterase and rhamnogalacturonase. Among pectinolytic enzymes, pectin lyase is the most important in depolymerization of pectin, since it cleaves internal glycosidic bonds of highly methylated pectins. The sequence is that of Probable pectin lyase A (pelA) from Aspergillus fumigatus (strain ATCC MYA-4609 / CBS 101355 / FGSC A1100 / Af293) (Neosartorya fumigata).